Here is a 198-residue protein sequence, read N- to C-terminus: Inner membrane-spanning protein YciB (198 aa).

The next 5 helical transmembrane spans lie at 36 to 56 (IFSATAMLIISSVVVYGILYL), 67 to 87 (LTLVACLVFGSLTLAFHSETF), 90 to 110 (WKAPVVNWLFAVAFAGSHFIG), 133 to 153 (LNIAWIVFFLFCGAANLYVAF), and 162 to 182 (FKVFGSLGMTLIFLVGQGIYL).

The protein belongs to the YciB family.

Its subcellular location is the cell inner membrane. Functionally, plays a role in cell envelope biogenesis, maintenance of cell envelope integrity and membrane homeostasis. The chain is Inner membrane-spanning protein YciB from Pseudomonas savastanoi pv. phaseolicola (strain 1448A / Race 6) (Pseudomonas syringae pv. phaseolicola (strain 1448A / Race 6)).